Here is a 482-residue protein sequence, read N- to C-terminus: Putative L-cysteine desulfhydrase 1 (482 aa).

The segment covering 1–10 has biased composition (acidic residues); that stretch reads MASIPPDDDA. Positions 1–45 are disordered; sequence MASIPPDDDAAAAAAAGAAENGYGNGKGNGNGPAPRPPPAKRPRS. Over residues 11–22 the composition is skewed to low complexity; that stretch reads AAAAAAGAAENG. Position 276 is an N6-(pyridoxal phosphate)lysine (Lys276).

Belongs to the class-V pyridoxal-phosphate-dependent aminotransferase family. Requires pyridoxal 5'-phosphate as cofactor.

The enzyme catalyses L-cysteine + H2O = hydrogen sulfide + pyruvate + NH4(+) + H(+). Its function is as follows. Catalyzes the production of hydrogen sulfide (H2S) from cysteine. This Oryza sativa subsp. japonica (Rice) protein is Putative L-cysteine desulfhydrase 1.